The following is a 324-amino-acid chain: Delta-aminolevulinic acid dehydratase (324 aa).

Positions 120, 122, and 130 each coordinate Zn(2+). Lys-195 acts as the Schiff-base intermediate with substrate in catalysis. Positions 205 and 217 each coordinate 5-aminolevulinate. Residue Glu-233 coordinates Mg(2+). The active-site Schiff-base intermediate with substrate is the Lys-248. The 5-aminolevulinate site is built by Ser-274 and Tyr-313.

The protein belongs to the ALAD family. Homooctamer. Zn(2+) is required as a cofactor.

The enzyme catalyses 2 5-aminolevulinate = porphobilinogen + 2 H2O + H(+). The protein operates within porphyrin-containing compound metabolism; protoporphyrin-IX biosynthesis; coproporphyrinogen-III from 5-aminolevulinate: step 1/4. Catalyzes an early step in the biosynthesis of tetrapyrroles. Binds two molecules of 5-aminolevulinate per subunit, each at a distinct site, and catalyzes their condensation to form porphobilinogen. The sequence is that of Delta-aminolevulinic acid dehydratase (hemB) from Bacillus subtilis (strain 168).